Consider the following 823-residue polypeptide: Lon protease (823 aa).

In terms of domain architecture, Lon N-terminal spans 22–217 (LPLLPVRDVV…KVNEHLNKEH (196 aa)). 369 to 376 (GPPGVGKT) serves as a coordination point for ATP. Residues 605 to 786 (KNEVGIVTGL…DDVLAVALET (182 aa)) form the Lon proteolytic domain. Active-site residues include Ser-692 and Lys-735. Residues 788 to 823 (PPPPPASEGKPAATVKAPPRRGIAAPRKGAMAGAKS) are disordered.

This sequence belongs to the peptidase S16 family. In terms of assembly, homohexamer. Organized in a ring with a central cavity.

The protein localises to the cytoplasm. It catalyses the reaction Hydrolysis of proteins in presence of ATP.. Its function is as follows. ATP-dependent serine protease that mediates the selective degradation of mutant and abnormal proteins as well as certain short-lived regulatory proteins. Required for cellular homeostasis and for survival from DNA damage and developmental changes induced by stress. Degrades polypeptides processively to yield small peptide fragments that are 5 to 10 amino acids long. Binds to DNA in a double-stranded, site-specific manner. This Geobacter metallireducens (strain ATCC 53774 / DSM 7210 / GS-15) protein is Lon protease.